A 109-amino-acid polypeptide reads, in one-letter code: Parvalbumin alpha (109 aa).

Ser-1 is modified (N-acetylserine). EF-hand domains are found at residues 38–73 and 77–109; these read KSDA…FSDG and LNDK…AKMT. Ca(2+)-binding residues include Asp-51, Asp-53, Ser-55, Tyr-57, Glu-59, Glu-62, Asp-90, Asp-92, Asp-94, Lys-96, and Glu-101.

The protein belongs to the parvalbumin family. As to quaternary structure, monomer.

In muscle, parvalbumin is thought to be involved in relaxation after contraction. It binds two calcium ions. This is Parvalbumin alpha from Raja clavata (Thornback ray).